Here is a 141-residue protein sequence, read N- to C-terminus: Large ribosomal subunit protein uL11 (141 aa).

This sequence belongs to the universal ribosomal protein uL11 family. As to quaternary structure, part of the ribosomal stalk of the 50S ribosomal subunit. Interacts with L10 and the large rRNA to form the base of the stalk. L10 forms an elongated spine to which L12 dimers bind in a sequential fashion forming a multimeric L10(L12)X complex. One or more lysine residues are methylated.

In terms of biological role, forms part of the ribosomal stalk which helps the ribosome interact with GTP-bound translation factors. This is Large ribosomal subunit protein uL11 from Streptococcus agalactiae serotype Ia (strain ATCC 27591 / A909 / CDC SS700).